A 644-amino-acid polypeptide reads, in one-letter code: ATP-dependent zinc metalloprotease FtsH (644 aa).

Residues 1–11 (MNDNKNNTVRN) lie on the Stromal side of the membrane. A helical membrane pass occupies residues 12–32 (LLIGIALLSGISLTAKKFDLI). The Lumenal portion of the chain corresponds to 33–128 (GVQGSESGKN…FDAHPAEQKN (96 aa)). A helical membrane pass occupies residues 129-149 (IFVNILSNILLPIIFITGLVY). Topologically, residues 150–644 (LFQNSENFGG…KNIPYVSKFN (495 aa)) are stromal. 226 to 233 (GPPGTGKT) serves as a coordination point for ATP. His447 contacts Zn(2+). Glu448 is a catalytic residue. Zn(2+) contacts are provided by His451 and Asp525.

It in the central section; belongs to the AAA ATPase family. The protein in the C-terminal section; belongs to the peptidase M41 family. In terms of assembly, homohexamer. Zn(2+) is required as a cofactor.

It is found in the plastid. The protein resides in the chloroplast thylakoid membrane. Acts as a processive, ATP-dependent zinc metallopeptidase. This chain is ATP-dependent zinc metalloprotease FtsH, found in Trieres chinensis (Marine centric diatom).